We begin with the raw amino-acid sequence, 97 residues long: DNA-directed RNA polymerase subunit omega (97 aa).

The protein belongs to the RNA polymerase subunit omega family. In terms of assembly, the RNAP catalytic core consists of 2 alpha, 1 beta, 1 beta' and 1 omega subunit. When a sigma factor is associated with the core the holoenzyme is formed, which can initiate transcription.

The catalysed reaction is RNA(n) + a ribonucleoside 5'-triphosphate = RNA(n+1) + diphosphate. Its function is as follows. Promotes RNA polymerase assembly. Latches the N- and C-terminal regions of the beta' subunit thereby facilitating its interaction with the beta and alpha subunits. The protein is DNA-directed RNA polymerase subunit omega of Coxiella burnetii (strain Dugway 5J108-111).